Consider the following 307-residue polypeptide: Aspartate carbamoyltransferase catalytic subunit (307 aa).

Positions 58 and 59 each coordinate carbamoyl phosphate. Residue Lys86 participates in L-aspartate binding. Carbamoyl phosphate-binding residues include Arg108, His138, and Gln141. Residues Arg171 and Arg223 each coordinate L-aspartate. 2 residues coordinate carbamoyl phosphate: Ala264 and Pro265.

Belongs to the aspartate/ornithine carbamoyltransferase superfamily. ATCase family. In terms of assembly, heterododecamer (2C3:3R2) of six catalytic PyrB chains organized as two trimers (C3), and six regulatory PyrI chains organized as three dimers (R2).

It catalyses the reaction carbamoyl phosphate + L-aspartate = N-carbamoyl-L-aspartate + phosphate + H(+). Its pathway is pyrimidine metabolism; UMP biosynthesis via de novo pathway; (S)-dihydroorotate from bicarbonate: step 2/3. Functionally, catalyzes the condensation of carbamoyl phosphate and aspartate to form carbamoyl aspartate and inorganic phosphate, the committed step in the de novo pyrimidine nucleotide biosynthesis pathway. This chain is Aspartate carbamoyltransferase catalytic subunit, found in Streptococcus suis (strain 98HAH33).